Consider the following 216-residue polypeptide: MRIILLGPPGAGKGTQAKLISEEFSIPHISTGDIFRANIKEKTPLGIEAKRYIDNGQLVPDEVTIGIVKDRLTKDDCDNGFLLDGFPRTVAQAEALDEFLKGINKELDVALLIKVPEEFILERMTGRRVCTSCGASYHIRFNPPKIEGKCDICDNELIQRKDDTEATVKERLEVYSKQTYPLINYYKDNGIISEVNGTESINEVFGNISNILGRDK.

10 to 15 (GAGKGT) is an ATP binding site. Residues 30-59 (STGDIFRANIKEKTPLGIEAKRYIDNGQLV) form an NMP region. AMP is bound by residues T31, R36, 57–59 (QLV), 85–88 (GFPR), and Q92. Residues 126–163 (GRRVCTSCGASYHIRFNPPKIEGKCDICDNELIQRKDD) form an LID region. R127 lines the ATP pocket. Zn(2+) is bound by residues C130 and C133. 136–137 (SY) lines the ATP pocket. C150 and C153 together coordinate Zn(2+). AMP is bound by residues R160 and R171. E199 is a binding site for ATP.

Belongs to the adenylate kinase family. As to quaternary structure, monomer.

Its subcellular location is the cytoplasm. The enzyme catalyses AMP + ATP = 2 ADP. It functions in the pathway purine metabolism; AMP biosynthesis via salvage pathway; AMP from ADP: step 1/1. In terms of biological role, catalyzes the reversible transfer of the terminal phosphate group between ATP and AMP. Plays an important role in cellular energy homeostasis and in adenine nucleotide metabolism. The sequence is that of Adenylate kinase from Clostridium botulinum (strain ATCC 19397 / Type A).